The following is a 120-amino-acid chain: Large ribosomal subunit protein eL18 (120 aa).

It belongs to the eukaryotic ribosomal protein eL18 family. In terms of assembly, part of the 50S ribosomal subunit.

The sequence is that of Large ribosomal subunit protein eL18 from Pyrococcus furiosus (strain ATCC 43587 / DSM 3638 / JCM 8422 / Vc1).